Reading from the N-terminus, the 256-residue chain is tRNA-cytidine(32) 2-sulfurtransferase (256 aa).

The PP-loop motif motif lies at 35–40 (SGGKDS). [4Fe-4S] cluster contacts are provided by Cys110, Cys113, and Cys201.

The protein belongs to the TtcA family. As to quaternary structure, homodimer. It depends on Mg(2+) as a cofactor. [4Fe-4S] cluster is required as a cofactor.

It localises to the cytoplasm. It catalyses the reaction cytidine(32) in tRNA + S-sulfanyl-L-cysteinyl-[cysteine desulfurase] + AH2 + ATP = 2-thiocytidine(32) in tRNA + L-cysteinyl-[cysteine desulfurase] + A + AMP + diphosphate + H(+). Its pathway is tRNA modification. Its function is as follows. Catalyzes the ATP-dependent 2-thiolation of cytidine in position 32 of tRNA, to form 2-thiocytidine (s(2)C32). The sulfur atoms are provided by the cysteine/cysteine desulfurase (IscS) system. This is tRNA-cytidine(32) 2-sulfurtransferase from Coxiella burnetii (strain Dugway 5J108-111).